The sequence spans 344 residues: Serine proteinase inhibitor 2 (344 aa).

It belongs to the serpin family. Poxviruses subfamily.

It is found in the host cytoplasm. Functionally, viral serpin that inhibits both cysteine and serine proteinases involved in the regulation of host inflammatory and apoptosis processes. Major anti-apoptotic protein which inhibits both intrinsic and extrinsic pathways and strongly cleaves host CASP1 and CASP8 but is a rather poor inhibitor of host CASP3. Prevents the proteolytic activity of host interleukin-1-beta converting enzyme (ICE) and ICE-like enzymes. Can also block apoptosis through host tumor necrosis factor (TNF) receptor. The inhibition of host ICE is an example of a 'cross-class' interaction, in which a serpin inhibits a non-serine proteinase. Also inhibits granzyme B. The protein is Serine proteinase inhibitor 2 (OPG199) of Cynomys gunnisoni (Gunnison's prairie dog).